The sequence spans 373 residues: Saccharopine dehydrogenase [NAD(+), L-lysine-forming] (373 aa).

N-acetylalanine; partial is present on alanine 2. L-saccharopine-binding residues include arginine 18 and lysine 77. Lysine 77 (proton acceptor) is an active-site residue. Histidine 96 acts as the Proton donor in catalysis. L-saccharopine is bound at residue glutamine 101. Arginine 130 lines the NAD(+) pocket. 2 residues coordinate L-saccharopine: arginine 131 and phenylalanine 135. NAD(+) is bound by residues 203–204 (GR), aspartate 227, threonine 231, tyrosine 251, and valine 278. Cysteines 205 and 249 form a disulfide. Residue 279–281 (SAD) coordinates L-saccharopine. 318–321 (IDHL) is a binding site for NAD(+). A Microbody targeting signal motif is present at residues 371–373 (SRL).

It belongs to the AlaDH/PNT family. As to quaternary structure, monomer.

The protein localises to the peroxisome. It carries out the reaction L-saccharopine + NAD(+) + H2O = L-lysine + 2-oxoglutarate + NADH + H(+). It functions in the pathway amino-acid biosynthesis; L-lysine biosynthesis via AAA pathway; L-lysine from L-alpha-aminoadipate (fungal route): step 3/3. With respect to regulation, inhibited by p-chloromercuribenzoate and iodoacetate by modification of the active site cysteine residue. Inhibited by diethyl pyrocarbonate by modification of histidine residues. Inhibited by pyridoxal 5'-phosphate by modification of an essential lysine residue. Its function is as follows. Catalyzes the NAD(+)-dependent cleavage of saccharopine to L-lysine and 2-oxoglutarate, the final step in the alpha-aminoadipate (AAA) pathway for lysine biosynthesis. This is Saccharopine dehydrogenase [NAD(+), L-lysine-forming] from Saccharomyces cerevisiae (strain ATCC 204508 / S288c) (Baker's yeast).